The primary structure comprises 100 residues: Large ribosomal subunit protein uL23 (100 aa).

Belongs to the universal ribosomal protein uL23 family. Part of the 50S ribosomal subunit. Contacts protein L29, and trigger factor when it is bound to the ribosome.

Functionally, one of the early assembly proteins it binds 23S rRNA. One of the proteins that surrounds the polypeptide exit tunnel on the outside of the ribosome. Forms the main docking site for trigger factor binding to the ribosome. This chain is Large ribosomal subunit protein uL23, found in Proteus mirabilis (strain HI4320).